The following is a 315-amino-acid chain: Ribosomal RNA small subunit methyltransferase H (315 aa).

Residues G37–H39, D57, F83, D105, and Q112 each bind S-adenosyl-L-methionine.

Belongs to the methyltransferase superfamily. RsmH family.

The protein resides in the cytoplasm. The catalysed reaction is cytidine(1402) in 16S rRNA + S-adenosyl-L-methionine = N(4)-methylcytidine(1402) in 16S rRNA + S-adenosyl-L-homocysteine + H(+). In terms of biological role, specifically methylates the N4 position of cytidine in position 1402 (C1402) of 16S rRNA. This chain is Ribosomal RNA small subunit methyltransferase H, found in Pseudomonas putida (strain GB-1).